Consider the following 1368-residue polypeptide: MTSSSKPARKTSKSKSKASKAAEAPAAPSNELSREAPTFQNKVIDKKALRSLVAWSYKHHGTAATSALADDLKDLGFRFATQAAVSISVDDLRVPGDKSTLLQEAEDQITATEERYRLGEITEVERHTKVIDTWTETNERLVQSVRRNFDENDPLNSVWMMANSGARGNMSQVRQLVGMRGLMANPQGEIIDLPIRTNFREGLTVTEYVISSYGARKGLVDTALRTADSGYLTRRLVDVAQDVIVREDDCGTTRSIKVAADDNGKYKSRLVGRLLAEDVVDGAGEVIATRNTEVDPPLSARIEAAGIAQVQVRSPLTCEAARSVCRKCYGWALAHNELVDLGEAVGIIAAQSIGEPGTQLTMRTFHTGGVSTAETGVVRSVVEGSVEFSAKAKVRPHRTPHGVEAQLAETDFSLTVKPSGKGKTQKLDVTAGSILFVNAGGSVPNDTILAQISSGSAVKKSVEKATKDVVCDLAGQVRYEDVIQPKEVPDRQGNITLKAQRLGRLWVFSGDVYNLPPNAMPVVQGGANVKTGEVLAESRQVSEFGGAVRLRESQGDSREVEIVTSSLTLKDCKLVATTTHSGQIWHLESKDNTRYRLNTEPGTKIANGEVIAELADDRFRTQTGGLVKFAPGLAIKKARSAKNGFEVSKGGTLLWIPQETHEINKDISLLMIEDGQWIEAGTEVVKDIFSQTAGIVTVTQKNDILREIIVRSGQLHLVSDSKVLARYTDGGGKMVNPGEEIAPGLKAEAMHMVEAVDTPEGGALLLRPVEEYAIPNEAHMPELGSVKQANGPSMGLKAVQRLAFKDGELVKSVEGVELLRTQLLLETFDTTPQMTVDVESAQDKRAKTIQRLQLTILETHLVRRDTLSDASHGSTHTEVKVADGDNIKRGDVVATVQILCKDDGVAQLPDRKDDEPIRRLIVERPSDTITVDLGGSKLSLKAGQRVVEGDDLGGGLTCPHSGQVEEVKGSSLTLRVGRPYMVSPDSILHVRDGDLVLRGDTLAQLVFERAKTGDIVQGLPRIEELLEARRPRESAVLCRKAGTIKVEQPEGEDNPTVSVNEGEELHTEYPILLGRTVMVSDGQEVKAGDLLTDGPINPHELLEVIFEDLRGPLPTMDAANQAIGRLQTALVQEVQNVYKSQGVTIDDKHLEVIVRQMTSKVRIEDAGDTTLLPGELIELRQVDQVNQAMAITGGAPAEFTPVLLGITKASLNTDSFISAASFQETTRVLTEAAIEGKSDWLRGLKENVIIGRLIPAGTGFSGFDEQLKAEALPHPDILGEENAGYRRATNLRPDYTVEMPLPQSNTAVLDDPSDTELEATRSRHGIEDRTNLAAFARPAAGEELAEEHVPDPGALEGLQEEGLLSQDS.

The disordered stretch occupies residues methionine 1–threonine 38. The span at proline 7 to alanine 18 shows a compositional bias: basic residues. Low complexity predominate over residues serine 19–serine 29. Residues cysteine 250, cysteine 318, cysteine 325, and cysteine 328 each coordinate Zn(2+). The interval alanine 1340–serine 1368 is disordered. The segment covering glycine 1353–serine 1368 has biased composition (low complexity).

Belongs to the RNA polymerase beta' chain family. RpoC2 subfamily. In terms of assembly, in cyanobacteria the RNAP catalytic core is composed of 2 alpha, 1 beta, 1 beta', 1 gamma and 1 omega subunit. When a sigma factor is associated with the core the holoenzyme is formed, which can initiate transcription. Zn(2+) is required as a cofactor.

It carries out the reaction RNA(n) + a ribonucleoside 5'-triphosphate = RNA(n+1) + diphosphate. Functionally, DNA-dependent RNA polymerase catalyzes the transcription of DNA into RNA using the four ribonucleoside triphosphates as substrates. The protein is DNA-directed RNA polymerase subunit beta' of Synechococcus sp. (strain RCC307).